The chain runs to 653 residues: Multidomain regulatory protein MT1410 (653 aa).

The region spanning Ser-86–Ala-142 is the PAC domain. Residues Asp-177–Arg-396 enclose the PPM-type phosphatase domain. 4 residues coordinate Mn(2+): Asp-211, Val-212, Asp-328, and Asp-387. An anti-sigma factor kinase region region spans residues Arg-397–Gln-544. Positions Ile-546 to Glu-653 constitute an STAS domain. Ser-600 bears the Phosphoserine mark.

Mg(2+) serves as cofactor. Requires Mn(2+) as cofactor. In terms of processing, autophosphorylated.

It catalyses the reaction O-phospho-L-seryl-[protein] + H2O = L-seryl-[protein] + phosphate. It carries out the reaction O-phospho-L-threonyl-[protein] + H2O = L-threonyl-[protein] + phosphate. The catalysed reaction is L-seryl-[protein] + ATP = O-phospho-L-seryl-[protein] + ADP + H(+). The enzyme catalyses L-threonyl-[protein] + ATP = O-phospho-L-threonyl-[protein] + ADP + H(+). Functionally, primarily acts as an independent SigF regulator that is sensitive to the osmosensory signal, mediating the cross talk of PknD with the SigF regulon. Possesses both phosphatase and kinase activities. The kinase domain functions as a classic anti-sigma factor-like kinase to phosphorylate the anti-anti-sigma factor domain at the canonical regulatory site, and the phosphatase domain antagonizes this activity. This is Multidomain regulatory protein MT1410 from Mycobacterium tuberculosis (strain CDC 1551 / Oshkosh).